Consider the following 146-residue polypeptide: Hemoglobin subunit beta-1 (146 aa).

One can recognise a Globin domain in the interval 2–146 (HWTAEEKQLI…VAHALARRYH (145 aa)). 2 residues coordinate heme b: histidine 63 and histidine 92.

Belongs to the globin family. In terms of assembly, heterotetramer of two alpha chains and two beta chains. As to expression, red blood cells.

Functionally, involved in oxygen transport from the lung to the various peripheral tissues. The polypeptide is Hemoglobin subunit beta-1 (HBB1) (Iguana iguana (Common iguana)).